We begin with the raw amino-acid sequence, 98 residues long: Gibberellin-regulated protein 1 (98 aa).

The first 23 residues, 1–23 (MAISKALIASLLISLLVLQLVQA), serve as a signal peptide directing secretion.

Belongs to the GASA family. Six disulfide bonds may be present. Expressed in flower buds, style, stamen filaments, vasculature of sepals, flower abscission zone and green siliques. Lower levels seen in the root phloem, cotyledons and vasculature of rosette leaves.

The protein localises to the secreted. Its function is as follows. Gibberellin-regulated protein that may function in hormonal controlled steps of development such as seed germination, flowering and seed maturation. This Arabidopsis thaliana (Mouse-ear cress) protein is Gibberellin-regulated protein 1 (GASA1).